The chain runs to 504 residues: Cytochrome P450 monooxygenase iccC (504 aa).

A helical transmembrane segment spans residues 7 to 26 (LPWILLYTGFLAIFLSRLFS). N-linked (GlcNAc...) asparagine glycosylation is found at Asn-134, Asn-312, Asn-365, and Asn-374. Cys-452 serves as a coordination point for heme. A glycan (N-linked (GlcNAc...) asparagine) is linked at Asn-494.

The protein belongs to the cytochrome P450 family. Heme is required as a cofactor.

The protein resides in the membrane. The enzyme catalyses (3E,5S)-3-[(2E,4E,8S,10E,12Z)-1-hydroxy-4,8-dimethyltetradeca-2,4,10,12-tetraen-1-ylidene]-5-[(4-hydroxyphenyl)methyl]pyrrolidine-2,4-dione + reduced [NADPH--hemoprotein reductase] + O2 = 3-[(2E,4E,8S,10E,12Z)-4,8-dimethyltetradeca-2,4,10,12-tetraenoyl]-4-hydroxy-5-(4-hydroxyphenyl)-1,2-dihydropyridin-2-one + oxidized [NADPH--hemoprotein reductase] + 2 H2O. The protein operates within mycotoxin biosynthesis. Cytochrome P450 monooxygenase; part of the gene cluster that mediates the biosynthesis of ilicicolin H, a 4-hydroxy-2-pyridonealkaloid that has potent and broad antifungal activities by inhibiting the mitochondrial respiration chain. IccC catalyzes the ring expansion of the tetramate intermediate to the acyclic 2-pyridone intermediate that contains the trans bis-diene chain. The biosynthesis of ilicicolin H starts with formation of the tetramic acid by the hybrid PKS-NRPS synthetase iccA with the partnering trans-enoyl reductase iccB since iccA lacks a designated enoylreductase (ER) domain. The cytochrome P450 monooxygenase iccC then catalyzes the ring expansion of the tetramate to the acyclic 2-pyridone. The pericyclase iccD further converts the acyclic 2-pyridone into 8-epi-ilicicolin H. Finally, the epimerase iccE converts 8-epi-ilicicolin H into ilicicolin H via epimerization. IccA to iccE are sufficient for ilicicolin H biosynthesis and the roles of the remaining enzymes, iccF, iccG and iccH within the pathway have still to be determined. The chain is Cytochrome P450 monooxygenase iccC from Talaromyces variabilis (Penicillium variabile).